A 120-amino-acid chain; its full sequence is MAYAKLGRTSSQRKALLRDLVTDLIINERIETTEAKAKELRPIVEKMITLGKRGDLHARRQAAAFVRNEIADVESGQDAIQKLFADIAPRFAERQGGYTRILKVGPRRGDGAPMAIIEFV.

Belongs to the bacterial ribosomal protein bL17 family. Part of the 50S ribosomal subunit. Contacts protein L32.

This Shouchella clausii (strain KSM-K16) (Alkalihalobacillus clausii) protein is Large ribosomal subunit protein bL17.